The primary structure comprises 401 residues: Formate-dependent phosphoribosylglycinamide formyltransferase (401 aa).

Residues 22–23 (EL) and Glu-82 each bind N(1)-(5-phospho-beta-D-ribosyl)glycinamide. ATP contacts are provided by residues Arg-115, Lys-157, 162 to 167 (SSGKGQ), 197 to 200 (EGFV), and Glu-205. Residues 120–315 (RLAAETLALP…EFELHARAIL (196 aa)) form the ATP-grasp domain. Mg(2+) contacts are provided by Glu-274 and Glu-286. N(1)-(5-phospho-beta-D-ribosyl)glycinamide is bound by residues Asp-293, Lys-362, and 369-370 (RR).

It belongs to the PurK/PurT family. In terms of assembly, homodimer.

The catalysed reaction is N(1)-(5-phospho-beta-D-ribosyl)glycinamide + formate + ATP = N(2)-formyl-N(1)-(5-phospho-beta-D-ribosyl)glycinamide + ADP + phosphate + H(+). It participates in purine metabolism; IMP biosynthesis via de novo pathway; N(2)-formyl-N(1)-(5-phospho-D-ribosyl)glycinamide from N(1)-(5-phospho-D-ribosyl)glycinamide (formate route): step 1/1. Functionally, involved in the de novo purine biosynthesis. Catalyzes the transfer of formate to 5-phospho-ribosyl-glycinamide (GAR), producing 5-phospho-ribosyl-N-formylglycinamide (FGAR). Formate is provided by PurU via hydrolysis of 10-formyl-tetrahydrofolate. In Polaromonas naphthalenivorans (strain CJ2), this protein is Formate-dependent phosphoribosylglycinamide formyltransferase.